The chain runs to 541 residues: Chaperonin GroEL 2 (541 aa).

Residues 29–32, 86–90, G413, 476–478, and D492 contribute to the ATP site; these read TLGP, DGTTT, and NAA.

This sequence belongs to the chaperonin (HSP60) family. In terms of assembly, forms a cylinder of 14 subunits composed of two heptameric rings stacked back-to-back. Interacts with the co-chaperonin GroES.

The protein localises to the secreted. The protein resides in the capsule. Its subcellular location is the cell surface. It localises to the cell wall. It catalyses the reaction ATP + H2O + a folded polypeptide = ADP + phosphate + an unfolded polypeptide.. Functionally, together with its co-chaperonin GroES, plays an essential role in assisting protein folding. The GroEL-GroES system forms a nano-cage that allows encapsulation of the non-native substrate proteins and provides a physical environment optimized to promote and accelerate protein folding. The polypeptide is Chaperonin GroEL 2 (Mycolicibacterium vanbaalenii (strain DSM 7251 / JCM 13017 / BCRC 16820 / KCTC 9966 / NRRL B-24157 / PYR-1) (Mycobacterium vanbaalenii)).